Reading from the N-terminus, the 613-residue chain is YTH domain-containing family protein 2 (613 aa).

Disordered stretches follow at residues 1-43, 215-234, and 244-396; these read MSAS…AQPR, SQVS…AKTA, and AKPQ…TVPA. A localization to mRNA processing bodies (P-bodies) region spans residues 2 to 397; sequence SASSLLEQRP…GMGGITVPAE (396 aa). Positions 16–27 are enriched in polar residues; the sequence is NKVQNGAVTQKD. Low complexity-rich tracts occupy residues 218–234, 295–307, and 345–360; these read STAP…AKTA, NGQP…PQPG, and PPQL…PSQP. The interaction with m6A-containing mRNAs stretch occupies residues 398 to 613; it reads PHPVLEKLRM…RMQDRQGRVK (216 aa). In terms of domain architecture, YTH spans 423–557; sequence GRVFIIKSYS…DKARQVLKII (135 aa). Residues 429-431, D435, 445-446, N475, W499, and W504 each bind RNA; these read KSY and WC. Composition is skewed to basic and acidic residues over residues 578–587 and 604–613; these read EEEESVKKVE and RMQDRQGRVK. The interval 578-613 is disordered; sequence EEEESVKKVEVQGSDPYSNNSSRSHYRMQDRQGRVK.

Belongs to the YTHDF family. YTHDF2 subfamily.

It is found in the cytoplasm. It localises to the cytosol. The protein resides in the P-body. The protein localises to the stress granule. Its subcellular location is the nucleus. Its function is as follows. Specifically recognizes and binds N6-methyladenosine (m6A)-containing RNAs, and regulates their stability. M6A is a modification present at internal sites of mRNAs and some non-coding RNAs and plays a role in mRNA stability and processing. Acts as a regulator of mRNA stability by promoting degradation of m6A-containing mRNAs. The YTHDF paralogs (ythdf1, ythdf2 and ythdf3) share m6A-containing mRNAs targets and act redundantly to mediate mRNA degradation and cellular differentiation. Plays a key role in maternal-to-zygotic transition during early embryonic development, the process during which maternally inherited mRNAs are degraded: acts by binding m6A-containing maternal mRNAs and promoting their degradation. More than one-third of maternal mRNAs can be modified by m6A. Binding to m6A-containing mRNAs results in mRNA degradation. Also involved in hematopoietic stem cells specification by binding to m6A-containing mRNAs, such as notch1a, and promote their degradation. The decreased Notch signaling following notch1a degradation promotes endothelial to hematopoietic transition. Promotes formation of phase-separated membraneless compartments, such as P-bodies or stress granules, by undergoing liquid-liquid phase separation upon binding to mRNAs containing multiple m6A-modified residues: polymethylated mRNAs act as a multivalent scaffold for the binding of YTHDF proteins, juxtaposing their disordered regions and thereby leading to phase separation. The resulting mRNA-YTHDF complexes then partition into different endogenous phase-separated membraneless compartments, such as P-bodies, stress granules or neuronal RNA granules. This chain is YTH domain-containing family protein 2, found in Danio rerio (Zebrafish).